A 309-amino-acid chain; its full sequence is Ribonuclease Z (309 aa).

Residues histidine 63, histidine 65, aspartate 67, histidine 68, histidine 141, aspartate 208, and histidine 266 each coordinate Zn(2+). The active-site Proton acceptor is the aspartate 67.

This sequence belongs to the RNase Z family. In terms of assembly, homodimer. It depends on Zn(2+) as a cofactor.

It carries out the reaction Endonucleolytic cleavage of RNA, removing extra 3' nucleotides from tRNA precursor, generating 3' termini of tRNAs. A 3'-hydroxy group is left at the tRNA terminus and a 5'-phosphoryl group is left at the trailer molecule.. Functionally, zinc phosphodiesterase, which displays some tRNA 3'-processing endonuclease activity. Probably involved in tRNA maturation, by removing a 3'-trailer from precursor tRNA. The protein is Ribonuclease Z of Salinispora arenicola (strain CNS-205).